We begin with the raw amino-acid sequence, 156 residues long: ATP synthase subunit b 2 (156 aa).

Residues 6 to 26 (SMFGQAISFVIFVWLCMKYVW) form a helical membrane-spanning segment.

This sequence belongs to the ATPase B chain family. F-type ATPases have 2 components, F(1) - the catalytic core - and F(0) - the membrane proton channel. F(1) has five subunits: alpha(3), beta(3), gamma(1), delta(1), epsilon(1). F(0) has three main subunits: a(1), b(2) and c(10-14). The alpha and beta chains form an alternating ring which encloses part of the gamma chain. F(1) is attached to F(0) by a central stalk formed by the gamma and epsilon chains, while a peripheral stalk is formed by the delta and b chains.

Its subcellular location is the cell inner membrane. Functionally, f(1)F(0) ATP synthase produces ATP from ADP in the presence of a proton or sodium gradient. F-type ATPases consist of two structural domains, F(1) containing the extramembraneous catalytic core and F(0) containing the membrane proton channel, linked together by a central stalk and a peripheral stalk. During catalysis, ATP synthesis in the catalytic domain of F(1) is coupled via a rotary mechanism of the central stalk subunits to proton translocation. Its function is as follows. Component of the F(0) channel, it forms part of the peripheral stalk, linking F(1) to F(0). The chain is ATP synthase subunit b 2 from Vibrio campbellii (strain ATCC BAA-1116).